The chain runs to 585 residues: Frizzled-5 (585 aa).

Positions M1 to A26 are cleaved as a signal peptide. Topologically, residues A27–W238 are extracellular. The region spanning S28–Y150 is the FZ domain. Disulfide bonds link C33–C94, C41–C87, C78–C116, C105–C147, and C109–C133. A glycan (N-linked (GlcNAc...) asparagine) is linked at N47. A glycan (N-linked (GlcNAc...) asparagine) is linked at N151. The segment at T156–C182 is disordered. The helical transmembrane segment at I239–I259 threads the bilayer. The Cytoplasmic portion of the chain corresponds to D260–P270. Residues I271–V291 traverse the membrane as a helical segment. At G292–C315 the chain is on the extracellular side. Residues T316–L336 traverse the membrane as a helical segment. The Cytoplasmic portion of the chain corresponds to S337–Q358. A helical membrane pass occupies residues Y359–S379. Residues S380–G402 are Extracellular-facing. The helical transmembrane segment at F403–F423 threads the bilayer. Over V424–R449 the chain is Cytoplasmic. The chain crosses the membrane as a helical span at residues I450 to Y470. The Extracellular segment spans residues E471–Y500. The helical transmembrane segment at W501 to I521 threads the bilayer. Over W522–V585 the chain is Cytoplasmic. The PDZ-binding signature appears at L582 to H584.

The protein belongs to the G-protein coupled receptor Fz/Smo family. Binding of unsaturated fatty acid molecules (via FZ domain) promotes homodimerization (via FZ domain). Interacts with WNT2B. Interacts with WNT7A. Interacts with GOPC. In terms of processing, ubiquitinated by RNF43 and ZNRF3, leading to its degradation by the proteasome. Detected in hippocampus (at protein level). Expressed in eye, kidney, lung, chondrocytes, epithelial cells of the small intestine and gobelet cells of the colon.

Its subcellular location is the cell membrane. The protein localises to the golgi apparatus membrane. It is found in the synapse. The protein resides in the perikaryon. It localises to the cell projection. Its subcellular location is the dendrite. The protein localises to the axon. Functionally, receptor for Wnt proteins. Functions in the canonical Wnt/beta-catenin signaling pathway. In vitro activates WNT2, WNT10B, WNT5A, but not WNT2B or WNT4 signaling. In neurons, activation by WNT7A promotes formation of synapses. May be involved in transduction and intercellular transmission of polarity information during tissue morphogenesis and/or in differentiated tissues. Plays a role in yolk sac angiogenesis and in placental vascularization. Plays a role in ocular development. This is Frizzled-5 (Fzd5) from Mus musculus (Mouse).